The primary structure comprises 35 residues: Photosystem II reaction center protein T (35 aa).

Residues Ala3–Phe23 traverse the membrane as a helical segment.

This sequence belongs to the PsbT family. As to quaternary structure, PSII is composed of 1 copy each of membrane proteins PsbA, PsbB, PsbC, PsbD, PsbE, PsbF, PsbH, PsbI, PsbJ, PsbK, PsbL, PsbM, PsbT, PsbY, PsbZ, Psb30/Ycf12, at least 3 peripheral proteins of the oxygen-evolving complex and a large number of cofactors. It forms dimeric complexes.

The protein resides in the plastid. Its subcellular location is the chloroplast thylakoid membrane. Its function is as follows. Found at the monomer-monomer interface of the photosystem II (PS II) dimer, plays a role in assembly and dimerization of PSII. PSII is a light-driven water plastoquinone oxidoreductase, using light energy to abstract electrons from H(2)O, generating a proton gradient subsequently used for ATP formation. This is Photosystem II reaction center protein T from Stewartia pseudocamellia (Japanese stewartia).